Consider the following 503-residue polypeptide: Xylan O-acetyltransferase 12 (503 aa).

At 1–54 (MWSALFSHLREVHKRSGVKEEKLIMKSPAAAGEAAGCHKPQATATNKMTVLQSP) the chain is on the cytoplasmic side. A helical; Signal-anchor for type II membrane protein transmembrane segment spans residues 55–77 (LGLRTILTSLVAFFIVVSSVSLL). At 78 to 503 (FDRSQDAQAQ…EFLYAYLMHK (426 aa)) the chain is on the lumenal side. Intrachain disulfides connect Cys153/Cys204, Cys175/Cys240, Cys184/Cys484, and Cys400/Cys480. N-linked (GlcNAc...) asparagine glycans are attached at residues Asn154, Asn164, Asn190, and Asn210. The GDS motif signature appears at 227–229 (GDS). Ser229 functions as the Nucleophile in the catalytic mechanism. N-linked (GlcNAc...) asparagine glycosylation is found at Asn256, Asn268, Asn373, Asn402, and Asn443. Asp479 functions as the Proton donor in the catalytic mechanism. A DXXH motif motif is present at residues 479 to 482 (DCTH). His482 (proton acceptor) is an active-site residue.

It belongs to the PC-esterase family. TBL subfamily.

It is found in the golgi apparatus membrane. Its function is as follows. Xylan acetyltransferase required for 2-O- and 3-O-monoacetylation of xylosyl residues in xylan. Catalyzes the 2-O-acetylation of xylan, followed by nonenzymatic acetyl migration to the O-3 position, resulting in products that are monoacetylated at both O-2 and O-3 positions. This is Xylan O-acetyltransferase 12 from Oryza sativa subsp. japonica (Rice).